Reading from the N-terminus, the 408-residue chain is Peptidase T (408 aa).

Residue histidine 81 coordinates Zn(2+). Residue aspartate 83 is part of the active site. Aspartate 142 is a Zn(2+) binding site. Glutamate 176 (proton acceptor) is an active-site residue. Residues glutamate 177, aspartate 199, and histidine 381 each contribute to the Zn(2+) site.

This sequence belongs to the peptidase M20B family. Requires Zn(2+) as cofactor.

The protein resides in the cytoplasm. The catalysed reaction is Release of the N-terminal residue from a tripeptide.. Its function is as follows. Cleaves the N-terminal amino acid of tripeptides. This Streptococcus gordonii (strain Challis / ATCC 35105 / BCRC 15272 / CH1 / DL1 / V288) protein is Peptidase T.